A 2641-amino-acid chain; its full sequence is Prosolanapyrone synthase (2641 aa).

Residues 14–440 enclose the Ketosynthase family 3 (KS3) domain; sequence PEPIAIVGMG…GANGHCIIDD (427 aa). Residues C187, H323, and H363 each act as for beta-ketoacyl synthase activity in the active site. The interval 456 to 515 is disordered; the sequence is SIGHINGHTNGHTNGHTNGHTNGHTNGHTNGHTNGAHASDGHNGHHQNGMNGNSASHMSE. Low complexity predominate over residues 461 to 490; sequence NGHTNGHTNGHTNGHTNGHTNGHTNGHTNG. Positions 619 to 920 are malonyl-CoA:ACP transacylase (MAT); it reads FVFTGQGAQW…KGPVGQISRS (302 aa). The N-terminal hotdog fold stretch occupies residues 1011-1149; that stretch reads HDLLGSKLPG…GRVRVIAGTS (139 aa). Residues 1011-1309 form a dehydratase (DH) domain region; it reads HDLLGSKLPG…GNLRCVTYTE (299 aa). The PKS/mFAS DH domain maps to 1011–1313; that stretch reads HDLLGSKLPG…CVTYTEVLPS (303 aa). The Proton acceptor; for dehydratase activity role is filled by H1043. The interval 1161 to 1313 is C-terminal hotdog fold; sequence ARTLDTKAWY…CVTYTEVLPS (153 aa). The active-site Proton donor; for dehydratase activity is D1227. The methyltransferase (MT) domain stretch occupies residues 1477–1665; sequence TGAYPQLVRF…GAELVLDDYP (189 aa). The segment at 1894–2206 is enoyl reductase (ER) domain; sequence GLLTSLYFKP…KGTHVGKLVV (313 aa). The interval 2231–2408 is ketoreductase (KR) domain; it reads NYLITGGLGG…STVSFGLIRD (178 aa). The Carrier domain maps to 2561–2639; that stretch reads RTVALVTDAI…ILANKIVDGA (79 aa). S2598 bears the O-(pantetheine 4'-phosphoryl)serine mark.

It participates in phytotoxin biosynthesis. Its function is as follows. Prosolanapyrone synthase; part of the gene cluster that mediates the biosynthesis of the phytotoxin solanapyrone, a causal agent of early blight disease of potato and tomato. The prosolanapyrone synthase sol1 is a polyketide synthase that produces the octaketide desmethylprosolanapyrone I via sequential condensations of 7 malonyl-CoA units with one acetyl-CoA unit, and one methylation step. The octaketide backbone is further methylated by the sol2 O-methyltransferase to yield prosolanapyrone I. Prosolanapyrone I is hydroxylated to prosolanapyrone II by the cytochrome P450 monooxygenase sol6. The solanapyrone synthase sol5 then catalyzes the oxidation of prosolanapyrone II and the subsequent Diels Alder cycloisomerization of the product prosolanapyrone III to solanapyrones A and D. Solanapyrones A and D are then converted into solanapyrones B and E, respectively, by the sol3 dehydrogenase. This is Prosolanapyrone synthase (sol1) from Alternaria solani.